The primary structure comprises 149 residues: Macrodomain Ter protein (149 aa).

It belongs to the MatP family. Homodimer.

The protein resides in the cytoplasm. Functionally, required for spatial organization of the terminus region of the chromosome (Ter macrodomain) during the cell cycle. Prevents early segregation of duplicated Ter macrodomains during cell division. Binds specifically to matS, which is a 13 bp signature motif repeated within the Ter macrodomain. The polypeptide is Macrodomain Ter protein (Vibrio parahaemolyticus serotype O3:K6 (strain RIMD 2210633)).